Consider the following 241-residue polypeptide: Small ribosomal subunit protein uS2 (241 aa).

Belongs to the universal ribosomal protein uS2 family.

The protein is Small ribosomal subunit protein uS2 of Salmonella choleraesuis (strain SC-B67).